Here is a 500-residue protein sequence, read N- to C-terminus: Protein nucleotidyltransferase YdiU (500 aa).

ATP-binding residues include Gly98, Gly100, Arg101, Lys124, Asp136, Gly137, Arg187, and Arg194. Asp263 serves as the catalytic Proton acceptor. Mg(2+) contacts are provided by Asn264 and Asp273. Asp273 lines the ATP pocket.

Belongs to the SELO family. The cofactor is Mg(2+). It depends on Mn(2+) as a cofactor.

It carries out the reaction L-seryl-[protein] + ATP = 3-O-(5'-adenylyl)-L-seryl-[protein] + diphosphate. The enzyme catalyses L-threonyl-[protein] + ATP = 3-O-(5'-adenylyl)-L-threonyl-[protein] + diphosphate. The catalysed reaction is L-tyrosyl-[protein] + ATP = O-(5'-adenylyl)-L-tyrosyl-[protein] + diphosphate. It catalyses the reaction L-histidyl-[protein] + UTP = N(tele)-(5'-uridylyl)-L-histidyl-[protein] + diphosphate. It carries out the reaction L-seryl-[protein] + UTP = O-(5'-uridylyl)-L-seryl-[protein] + diphosphate. The enzyme catalyses L-tyrosyl-[protein] + UTP = O-(5'-uridylyl)-L-tyrosyl-[protein] + diphosphate. In terms of biological role, nucleotidyltransferase involved in the post-translational modification of proteins. It can catalyze the addition of adenosine monophosphate (AMP) or uridine monophosphate (UMP) to a protein, resulting in modifications known as AMPylation and UMPylation. This Herminiimonas arsenicoxydans protein is Protein nucleotidyltransferase YdiU.